Reading from the N-terminus, the 79-residue chain is uncharacterized protein (79 aa).

It is found in the mitochondrion. This is an uncharacterized protein from Marchantia polymorpha (Common liverwort).